Reading from the N-terminus, the 381-residue chain is (S)-scoulerine 9-O-methyltransferase (381 aa).

Residues Gly-223, Glu-246, Asp-266, Met-267, and Lys-280 each coordinate S-adenosyl-L-methionine. Residue His-284 is the Proton acceptor of the active site.

It belongs to the class I-like SAM-binding methyltransferase superfamily. Cation-independent O-methyltransferase family. COMT subfamily.

The enzyme catalyses (S)-scoulerine + S-adenosyl-L-methionine = (S)-tetrahydrocolumbamine + S-adenosyl-L-homocysteine + H(+). Its function is as follows. Produces a precursor of protoberberine alkaloids. This chain is (S)-scoulerine 9-O-methyltransferase (SMT), found in Coptis japonica (Japanese goldthread).